A 479-amino-acid chain; its full sequence is Glutamate--tRNA ligase (479 aa).

Positions 11-21 (PSPTGYLHIGG) match the 'HIGH' region motif. Positions 108, 110, 135, and 137 each coordinate Zn(2+). Positions 250–254 (KLSKR) match the 'KMSKS' region motif. An ATP-binding site is contributed by lysine 253.

It belongs to the class-I aminoacyl-tRNA synthetase family. Glutamate--tRNA ligase type 1 subfamily. As to quaternary structure, monomer. Zn(2+) is required as a cofactor.

The protein resides in the cytoplasm. The catalysed reaction is tRNA(Glu) + L-glutamate + ATP = L-glutamyl-tRNA(Glu) + AMP + diphosphate. In terms of biological role, catalyzes the attachment of glutamate to tRNA(Glu) in a two-step reaction: glutamate is first activated by ATP to form Glu-AMP and then transferred to the acceptor end of tRNA(Glu). In Myxococcus xanthus (strain DK1622), this protein is Glutamate--tRNA ligase.